A 593-amino-acid polypeptide reads, in one-letter code: FAD-binding monooxygenase acrE (593 aa).

FAD contacts are provided by residues 61–64, 73–74, and tyrosine 79; these read TWRF and DS. Residue 71–73 participates in NADP(+) binding; the sequence is RVD. NADP(+) is bound by residues 200–206 and 223–224; these read TGASGVQ and RS.

It belongs to the FAD-binding monooxygenase family. It depends on FAD as a cofactor.

Its pathway is secondary metabolite biosynthesis. Its function is as follows. FAD-binding monooxygenase; part of the cluster that mediates the biosynthesis of acurin A, a highly reduced polyketide coupled to a serine via a peptide bond. The activities of the highly reducing polyketide synthase acrA and the nonribosomal peptide synthetase acrB are collectively responsible for the synthesis of the acurin A core structure with a heptaketide backbone produced by acrA covalently fused to a L-serine by acrB. After the formation of the PK-NRP hybrid product, it is detached from acrB by reductive release to set up the formation of the lactam ring by aldol condensation. The hydrolyase acrC then catalyzes water loss to generate a double bond in the ring. This double bond is probably reduced, which is followed by three oxidations at C-22 to generate the carboxylic acid moiety, involving probably the FAD-binding monooxygenase acrE and the cytochrome P450 monooxygenases acrD and acrF. Finally, a last methylation step performed by the O-methyltransferase acrG leads to the production of acurin A. This Aspergillus aculeatus (strain ATCC 16872 / CBS 172.66 / WB 5094) protein is FAD-binding monooxygenase acrE.